The chain runs to 499 residues: MLHSASEILKQLDSGEVTAVEVIAQSLAAIRASQPTINAFTHVAEETAMQAAEAVDADRKAGKTLGPLAGLPVAIKDVLCTSDMPTTCSSKMLEGFVPPYDATVVARLKSAGAIVVGKTNMDEFAMGASTETSAMGVTGNPWDTTKTPGGSSGGAAAAVAAGAVPLSLGTDTGGSIRQPAAFCGITGLKPTYGRVSRYGLVAFASSLDQAGPMGWSVDDVAIGLQAMAGYDPRDSTSVNAEVPDFTPAMAAEDVRGMRIGVLREGLDQDGISPAVRDALATAESVFREQGAEIVEVELPHSKYWVPTYYVIAPCEASSNLSRFDGAHYGYRVADAEIAAADSGPLEAMYSLSRAGGFGSEVKRRIMVGTYALSEGYYDAYYNQALKVRRLIRNDYDAAFQQVDLMLGPVTPSPAFALNEKTDDPIAMYLCDLFTVGANLAGVPAISLPGGFDAVGLPVGVQLQAPVMEETRLLRAGNVFQMASDFHTRRPPTFTANHSQ.

Catalysis depends on charge relay system residues lysine 76 and serine 151. The Acyl-ester intermediate role is filled by serine 175.

This sequence belongs to the amidase family. GatA subfamily. In terms of assembly, heterotrimer of A, B and C subunits.

It carries out the reaction L-glutamyl-tRNA(Gln) + L-glutamine + ATP + H2O = L-glutaminyl-tRNA(Gln) + L-glutamate + ADP + phosphate + H(+). Its function is as follows. Allows the formation of correctly charged Gln-tRNA(Gln) through the transamidation of misacylated Glu-tRNA(Gln) in organisms which lack glutaminyl-tRNA synthetase. The reaction takes place in the presence of glutamine and ATP through an activated gamma-phospho-Glu-tRNA(Gln). The chain is Glutamyl-tRNA(Gln) amidotransferase subunit A from Rhodopirellula baltica (strain DSM 10527 / NCIMB 13988 / SH1).